We begin with the raw amino-acid sequence, 333 residues long: Adenosine deaminase (333 aa).

2 residues coordinate Zn(2+): H12 and H14. H14, D16, and G170 together coordinate substrate. A Zn(2+)-binding site is contributed by H197. The active-site Proton donor is the E200. D278 is a Zn(2+) binding site. D279 provides a ligand contact to substrate.

The protein belongs to the metallo-dependent hydrolases superfamily. Adenosine and AMP deaminases family. Adenosine deaminase subfamily. Requires Zn(2+) as cofactor.

It catalyses the reaction adenosine + H2O + H(+) = inosine + NH4(+). It carries out the reaction 2'-deoxyadenosine + H2O + H(+) = 2'-deoxyinosine + NH4(+). Functionally, catalyzes the hydrolytic deamination of adenosine and 2-deoxyadenosine. The polypeptide is Adenosine deaminase (Salmonella dublin (strain CT_02021853)).